The chain runs to 488 residues: Beta-xylosidase (488 aa).

Catalysis depends on Glu-163, which acts as the Proton donor. Catalysis depends on Glu-275, which acts as the Nucleophile.

The protein belongs to the glycosyl hydrolase 39 family.

The catalysed reaction is Hydrolysis of (1-&gt;4)-beta-D-xylans, to remove successive D-xylose residues from the non-reducing termini.. Beta-xylosidase is an intracellular xylan-degrading enzyme. The polypeptide is Beta-xylosidase (xynB) (Caldicellulosiruptor saccharolyticus (Caldocellum saccharolyticum)).